The primary structure comprises 279 residues: Nitrate import permease protein NrtB (279 aa).

5 helical membrane-spanning segments follow: residues 25 to 45 (FLPY…ISAI), 91 to 111 (VAIG…VLGM), 149 to 169 (AIFV…AVGI), 200 to 220 (VPYV…AIVA), and 249 to 269 (IILA…LVAW). An ABC transmembrane type-1 domain is found at 84 to 267 (ILISLQRVAI…LVGLSLDRLV (184 aa)).

This sequence belongs to the binding-protein-dependent transport system permease family. CysTW subfamily. In terms of assembly, the complex is composed of two ATP-binding proteins (NrtC and NrtD), two transmembrane proteins (NrtB) and a solute-binding protein (NrtA).

Its subcellular location is the cell inner membrane. Its function is as follows. Part of the ABC transporter complex NrtABCD involved in nitrate uptake. The complex is probably also involved in nitrite transport. Probably responsible for the translocation of the substrate across the membrane. The sequence is that of Nitrate import permease protein NrtB from Synechococcus elongatus (strain ATCC 33912 / PCC 7942 / FACHB-805) (Anacystis nidulans R2).